We begin with the raw amino-acid sequence, 219 residues long: Cyclin-U4-3 (219 aa).

The protein belongs to the cyclin family. Cyclin U/P subfamily. As to quaternary structure, interacts with CDKA-1. As to expression, expressed at low levels in roots, stems and flowers. Expressed in the shoot apex, leaf primordia and young leaves.

The chain is Cyclin-U4-3 (CYCU4-3) from Arabidopsis thaliana (Mouse-ear cress).